Reading from the N-terminus, the 366-residue chain is Probable UDP-arabinopyranose mutase 2 (366 aa).

Residues 104–106 (DDD) carry the DXD motif motif. Arg-152 carries an N-linked (Glc...) arginine glycan.

The protein belongs to the RGP family. As to quaternary structure, homopentamer or homohexamer. Mn(2+) serves as cofactor. Mg(2+) is required as a cofactor. In terms of processing, reversibly glycosylated by UDP-glucose, UDP-xylose and UDP-galactose, but not UDP-mannose. Expressed in all tissues tested, including root, tuber, leaf, petiole, shoot, stolon and stem.

It localises to the secreted. The protein localises to the cell wall. Its subcellular location is the cell junction. The protein resides in the plasmodesma. It is found in the golgi apparatus. It carries out the reaction UDP-beta-L-arabinofuranose = UDP-beta-L-arabinopyranose. Its function is as follows. Probable UDP-L-arabinose mutase involved in the biosynthesis of cell wall non-cellulosic polysaccharides. Was initially shown to possess an autoglycosylating activity which is dependent on the presence of UDP-glucose and manganese. In Solanum tuberosum (Potato), this protein is Probable UDP-arabinopyranose mutase 2.